Here is a 1477-residue protein sequence, read N- to C-terminus: Ring canal kelch protein (1477 aa).

3 disordered regions span residues leucine 19–glycine 62, leucine 76–glycine 96, and serine 108–glutamate 137. A compositionally biased stretch (low complexity) spans serine 20–asparagine 46. 2 positions are modified to phosphoserine: serine 108 and serine 111. The BTB domain maps to cysteine 157–glutamate 223. Kelch repeat units follow at residues isoleucine 404–aspartate 449, lysine 450–glycine 496, isoleucine 498–glycine 543, leucine 545–asparagine 592, leucine 594–glycine 639, and leucine 641–lysine 687. Selenocysteine 690 is a non-standard amino acid (selenocysteine). Disordered stretches follow at residues proline 744–isoleucine 841, histidine 1119–threonine 1200, arginine 1291–aspartate 1326, proline 1359–lysine 1416, and proline 1446–aspartate 1477. Low complexity-rich tracts occupy residues alanine 763–asparagine 813 and alanine 820–glutamine 839. A compositionally biased stretch (polar residues) spans isoleucine 1125–threonine 1137. Residues lysine 1166 to serine 1192 show a composition bias toward low complexity. 2 stretches are compositionally biased toward low complexity: residues glutamine 1374–glutamine 1391 and threonine 1456–aspartate 1477.

In terms of tissue distribution, both proteins are expressed in ovaries, male testis, ovariectomized females, cuticle, salivary gland and imaginal disks. Kelch short protein is the predominant form and is also expressed in fat bodies. On entry into metamorphosis levels of full-length protein increase in testis and imaginal disks.

The protein localises to the cytoplasm. It localises to the cytoskeleton. Component of ring canals that regulates the flow of cytoplasm between cells. May be involved in the regulation of cytoplasm flow from nurse cells to the oocyte during oogenesis. Binds actin. In Drosophila melanogaster (Fruit fly), this protein is Ring canal kelch protein (kel).